The chain runs to 1155 residues: DNA-directed RNA polymerase subunit beta (1155 aa).

This sequence belongs to the RNA polymerase beta chain family. In terms of assembly, the RNAP catalytic core consists of 2 alpha, 1 beta, 1 beta' and 1 omega subunit. When a sigma factor is associated with the core the holoenzyme is formed, which can initiate transcription.

The catalysed reaction is RNA(n) + a ribonucleoside 5'-triphosphate = RNA(n+1) + diphosphate. In terms of biological role, DNA-dependent RNA polymerase catalyzes the transcription of DNA into RNA using the four ribonucleoside triphosphates as substrates. In Thermobifida fusca (strain YX), this protein is DNA-directed RNA polymerase subunit beta.